Here is a 154-residue protein sequence, read N- to C-terminus: Large ribosomal subunit protein uL16 (154 aa).

The protein belongs to the universal ribosomal protein uL16 family. In terms of assembly, part of the 50S ribosomal subunit.

Its function is as follows. Binds 23S rRNA and is also seen to make contacts with the A and possibly P site tRNAs. This chain is Large ribosomal subunit protein uL16, found in Synechococcus sp. (strain RCC307).